Here is a 427-residue protein sequence, read N- to C-terminus: L-rhamnose isomerase (427 aa).

Mn(2+)-binding residues include H264, D296, and D298.

This sequence belongs to the rhamnose isomerase family. Requires Mn(2+) as cofactor.

It is found in the cytoplasm. It catalyses the reaction L-rhamnopyranose = L-rhamnulose. It functions in the pathway carbohydrate degradation; L-rhamnose degradation; glycerone phosphate from L-rhamnose: step 1/3. Functionally, catalyzes the interconversion of L-rhamnose and L-rhamnulose. This chain is L-rhamnose isomerase, found in Rhodopirellula baltica (strain DSM 10527 / NCIMB 13988 / SH1).